The primary structure comprises 430 residues: Glutamate-1-semialdehyde 2,1-aminomutase (430 aa).

Position 267 is an N6-(pyridoxal phosphate)lysine (K267).

This sequence belongs to the class-III pyridoxal-phosphate-dependent aminotransferase family. HemL subfamily. Homodimer. It depends on pyridoxal 5'-phosphate as a cofactor.

It is found in the cytoplasm. It carries out the reaction (S)-4-amino-5-oxopentanoate = 5-aminolevulinate. It participates in porphyrin-containing compound metabolism; protoporphyrin-IX biosynthesis; 5-aminolevulinate from L-glutamyl-tRNA(Glu): step 2/2. In Natranaerobius thermophilus (strain ATCC BAA-1301 / DSM 18059 / JW/NM-WN-LF), this protein is Glutamate-1-semialdehyde 2,1-aminomutase.